The sequence spans 373 residues: DNA replication and repair protein RecF (373 aa).

30–37 (GPNGQGKT) contacts ATP.

It belongs to the RecF family.

The protein resides in the cytoplasm. Functionally, the RecF protein is involved in DNA metabolism; it is required for DNA replication and normal SOS inducibility. RecF binds preferentially to single-stranded, linear DNA. It also seems to bind ATP. This chain is DNA replication and repair protein RecF, found in Streptomyces avermitilis (strain ATCC 31267 / DSM 46492 / JCM 5070 / NBRC 14893 / NCIMB 12804 / NRRL 8165 / MA-4680).